We begin with the raw amino-acid sequence, 275 residues long: uncharacterized protein (275 aa).

[4Fe-4S] cluster contacts are provided by Cys-97, Cys-102, Cys-136, and Cys-140. Cys-140 is a binding site for siroheme.

This sequence belongs to the nitrite and sulfite reductase 4Fe-4S domain family.

This is an uncharacterized protein from Methanocaldococcus jannaschii (strain ATCC 43067 / DSM 2661 / JAL-1 / JCM 10045 / NBRC 100440) (Methanococcus jannaschii).